Consider the following 188-residue polypeptide: Probable DNA-directed RNA polymerase subunit delta (188 aa).

An HTH HARE-type domain is found at 14–83 (LSMIEVARAI…GDNKWGLRSW (70 aa)). A disordered region spans residues 117–188 (GDEDAIDYSD…EDDEDDEEEE (72 aa)).

Belongs to the RpoE family. As to quaternary structure, RNAP is composed of a core of 2 alpha, a beta and a beta' subunits. The core is associated with a delta subunit and one of several sigma factors.

Functionally, participates in both the initiation and recycling phases of transcription. In the presence of the delta subunit, RNAP displays an increased specificity of transcription, a decreased affinity for nucleic acids, and an increased efficiency of RNA synthesis because of enhanced recycling. The protein is Probable DNA-directed RNA polymerase subunit delta of Streptococcus uberis (strain ATCC BAA-854 / 0140J).